A 340-amino-acid chain; its full sequence is Extracellular matrix protein-binding protein emp (340 aa).

A signal peptide spans 1–26 (MKKKLLVLTMSTLFATQLINSNHAKA).

The protein localises to the cell surface. Adhesin that binds to the host cell extracellular matrix proteins fibronectin, fibrinogen, collagen, and vitronectin. The polypeptide is Extracellular matrix protein-binding protein emp (emp) (Staphylococcus aureus (strain Mu50 / ATCC 700699)).